Reading from the N-terminus, the 145-residue chain is Protein BUD31 homolog 3 (145 aa).

The protein belongs to the BUD31 (G10) family.

The protein resides in the nucleus. This Oryza sativa subsp. japonica (Rice) protein is Protein BUD31 homolog 3.